Reading from the N-terminus, the 1163-residue chain is Integrin alpha-X (1163 aa).

The first 19 residues, 1–19 (MTRTRAALLLFTALATSLG), serve as a signal peptide directing secretion. Topologically, residues 20-1107 (FNLDTEELTA…EKYKVHNPTP (1088 aa)) are extracellular. FG-GAP repeat units lie at residues 23 to 78 (DTEE…ACEP) and 79 to 138 (IGLQ…TQRL). A glycan (N-linked (GlcNAc...) asparagine) is linked at Asn61. A disulfide bond links Cys69 and Cys76. N-linked (GlcNAc...) asparagine glycosylation is present at Asn89. 2 disulfides stabilise this stretch: Cys108/Cys126 and Cys116/Cys145. 4 residues coordinate Mg(2+): Asp157, Ser159, Ser161, and Asp259. A VWFA domain is found at 165-339 (RNFATMMNFV…KEKIFAIEGT (175 aa)). FG-GAP repeat units lie at residues 340–391 (ETTS…PTFI), 392–443 (NMSQ…SRQW), 444–504 (RMKA…WRRW), 507–565 (DAVL…PSIS), and 570–630 (QRIA…FIPA). A glycan (N-linked (GlcNAc...) asparagine) is linked at Asn392. Positions 466, 468, 470, and 474 each coordinate Ca(2+). Cys495 and Cys506 form a disulfide bridge. Ca(2+)-binding residues include Asp530, Asn532, Asp534, Asp538, Asp593, Asp597, and Asp601. 2 cysteine pairs are disulfide-bonded: Cys639–Cys722 and Cys655–Cys712. N-linked (GlcNAc...) asparagine glycosylation is found at Asn697 and Asn735. Disulfide bonds link Cys771/Cys777 and Cys848/Cys863. N-linked (GlcNAc...) asparagine glycans are attached at residues Asn899 and Asn939. 2 disulfide bridges follow: Cys998/Cys1022 and Cys1027/Cys1032. A glycan (N-linked (GlcNAc...) asparagine) is linked at Asn1050. A helical membrane pass occupies residues 1108–1128 (LIVGSSIGGLLLLALITAVLY). Residues 1129 to 1163 (KVGFFKRQYKEMMEEANGQIAPENGTQTPSPPSEK) are Cytoplasmic-facing. The short motif at 1131–1135 (GFFKR) is the GFFKR motif element.

This sequence belongs to the integrin alpha chain family. As to quaternary structure, heterodimer of an alpha and a beta subunit. Alpha-X associates with beta-2. In terms of tissue distribution, predominantly expressed in monocytes and granulocytes.

Its subcellular location is the membrane. Functionally, integrin alpha-X/beta-2 is a receptor for fibrinogen. It recognizes the sequence G-P-R in fibrinogen. It mediates cell-cell interaction during inflammatory responses. It is especially important in monocyte adhesion and chemotaxis. The protein is Integrin alpha-X (ITGAX) of Homo sapiens (Human).